A 394-amino-acid chain; its full sequence is Protein TsgA homolog (394 aa).

Transmembrane regions (helical) follow at residues 11 to 31 (WISY…GIVM), 51 to 71 (FLNA…EIIP), 76 to 96 (LVFG…GHNL), 101 to 121 (ISMF…TFLV), 134 to 154 (LLFT…AAAM), 162 to 182 (WYWV…LTLC), 206 to 226 (VGVL…LGFI), 246 to 266 (QLVS…SFIL), 274 to 294 (IVTV…STDN), 302 to 322 (ILAL…LGSL), 334 to 354 (FILT…GPIV), and 363 to 383 (LATA…LGFF).

This sequence belongs to the major facilitator superfamily. TsgA family.

The protein resides in the cell inner membrane. This Yersinia pseudotuberculosis serotype O:1b (strain IP 31758) protein is Protein TsgA homolog.